A 310-amino-acid chain; its full sequence is MEEENATLLTEFVLTGFLYQPQWKIPLFLAFLVIYLITIMGNLGLIAVIWKDPHLHIPMYLLLGNLAFVDALLSSSVTLKMLINFLAKSKMISLSECKIQLFSFAISVTTECFLLATMAYDRYVAICKPLLYPAIMTNGLCIRLLILSYVGGLLHALIHEGFLFRLTFCNSNIIQHFYCDIIPLLKISYTDSSINFLMVFIFAGSIQVFTIGTVLISYIFVLYTILKKKSVKGMRKAFSTCGAHLLSVSLYYGPLAFMYMGSASPQADDQDMMESLFYTVIVPLLNPMIYSLRNKQVIASFTKMFKRNDV.

Over 1-28 (MEEENATLLTEFVLTGFLYQPQWKIPLF) the chain is Extracellular. Asparagine 5 carries an N-linked (GlcNAc...) asparagine glycan. The chain crosses the membrane as a helical span at residues 29–49 (LAFLVIYLITIMGNLGLIAVI). Over 50–56 (WKDPHLH) the chain is Cytoplasmic. The chain crosses the membrane as a helical span at residues 57–77 (IPMYLLLGNLAFVDALLSSSV). The Extracellular segment spans residues 78-98 (TLKMLINFLAKSKMISLSECK). Residues cysteine 97 and cysteine 179 are joined by a disulfide bond. A helical transmembrane segment spans residues 99-119 (IQLFSFAISVTTECFLLATMA). The Cytoplasmic segment spans residues 120-143 (YDRYVAICKPLLYPAIMTNGLCIR). Residues 144 to 164 (LLILSYVGGLLHALIHEGFLF) form a helical membrane-spanning segment. Residues 165–195 (RLTFCNSNIIQHFYCDIIPLLKISYTDSSIN) lie on the Extracellular side of the membrane. The helical transmembrane segment at 196–216 (FLMVFIFAGSIQVFTIGTVLI) threads the bilayer. At 217-240 (SYIFVLYTILKKKSVKGMRKAFST) the chain is on the cytoplasmic side. Residues 241–261 (CGAHLLSVSLYYGPLAFMYMG) traverse the membrane as a helical segment. Over 262–271 (SASPQADDQD) the chain is Extracellular. A helical membrane pass occupies residues 272 to 292 (MMESLFYTVIVPLLNPMIYSL). Residues 293–310 (RNKQVIASFTKMFKRNDV) lie on the Cytoplasmic side of the membrane.

The protein belongs to the G-protein coupled receptor 1 family.

The protein resides in the cell membrane. Its function is as follows. Odorant receptor. The protein is Olfactory receptor 5H14 (OR5H14) of Homo sapiens (Human).